The sequence spans 998 residues: Kinesin-like protein KIF19 (998 aa).

In terms of domain architecture, Kinesin motor spans glutamine 11–isoleucine 346. Glycine 104–threonine 111 is an ATP binding site. 2 coiled-coil regions span residues histidine 360–alanine 391 and glutamate 424–isoleucine 452. Over residues glutamate 482 to aspartate 494 the composition is skewed to basic and acidic residues. The interval glutamate 482–leucine 503 is disordered. The stretch at glutamate 507–arginine 552 forms a coiled coil. Polar residues-rich tracts occupy residues serine 662–proline 676, lysine 684–alanine 697, serine 746–leucine 761, and threonine 836–glutamate 852. 4 disordered regions span residues serine 662–glutamate 706, serine 746–proline 765, glycine 794–leucine 911, and lysine 948–asparagine 998. Basic and acidic residues predominate over residues histidine 989–asparagine 998.

This sequence belongs to the TRAFAC class myosin-kinesin ATPase superfamily. Kinesin family.

The protein resides in the cytoplasm. It is found in the cytoskeleton. It localises to the cell projection. Its subcellular location is the cilium. Functionally, plus end-directed microtubule-dependent motor protein that regulates the length of motile cilia by mediating depolymerization of microtubules at ciliary tips. The chain is Kinesin-like protein KIF19 (KIF19) from Homo sapiens (Human).